Consider the following 353-residue polypeptide: Rhodopsin (353 aa).

Over 1 to 36 the chain is Extracellular; that stretch reads MNGTEGPYFYVPMVNTSGIVRSPYEYPQYYLVNPAA. N-linked (GlcNAc...) asparagine glycosylation is found at Asn-2 and Asn-15. A helical transmembrane segment spans residues 37-61; the sequence is YARLGAYMFLLILVGFPINFLTLYV. The Cytoplasmic segment spans residues 62 to 73; the sequence is TIEHKKLRTPLN. Residues 74–96 traverse the membrane as a helical segment; that stretch reads YILLNLAVADLFMVFGGFTTTMY. Over 97–110 the chain is Extracellular; sequence TSMHGYFVLGRLGC. Cys-110 and Cys-187 form a disulfide bridge. A helical transmembrane segment spans residues 111 to 133; sequence NIEGFFATLGGEIALWSLVVLAI. The 'Ionic lock' involved in activated form stabilization motif lies at 134-136; it reads ERW. Residues 134–152 are Cytoplasmic-facing; that stretch reads ERWVVVCKPISNFRFGENH. The chain crosses the membrane as a helical span at residues 153–173; the sequence is AIMGLAFTWLMALACAAPPLV. Over 174–202 the chain is Extracellular; the sequence is GWSRYIPEGMQCSCGIDYYTRAEGFNNES. N-linked (GlcNAc...) asparagine glycosylation is present at Asn-200. The chain crosses the membrane as a helical span at residues 203 to 224; that stretch reads FVIYMFVCHFTVPLMVVFFCYG. The Cytoplasmic portion of the chain corresponds to 225–252; the sequence is RLLCAVKEAAAAQQESETTQRAEREVTR. Residues 253–274 traverse the membrane as a helical segment; sequence MVIMMVVAFLVCWLPYASVAWW. The Extracellular portion of the chain corresponds to 275–286; the sequence is IFTHQGSEFGPV. The helical transmembrane segment at 287–308 threads the bilayer; it reads FMTIPAFFAKSSSIYNPMIYIC. The residue at position 296 (Lys-296) is an N6-(retinylidene)lysine. Residues 309–353 lie on the Cytoplasmic side of the membrane; that stretch reads LNKQFRHCMITTLCCGKNPFEEEEGASTASKTEASSVSSSSVSPA. 2 S-palmitoyl cysteine lipidation sites follow: Cys-322 and Cys-323. The interval 331-353 is disordered; that stretch reads EEGASTASKTEASSVSSSSVSPA. A compositionally biased stretch (low complexity) spans 334 to 353; sequence ASTASKTEASSVSSSSVSPA.

The protein belongs to the G-protein coupled receptor 1 family. Opsin subfamily. In terms of processing, phosphorylated on some or all of the serine and threonine residues present in the C-terminal region. Post-translationally, contains one covalently linked retinal chromophore.

The protein localises to the membrane. It localises to the cell projection. It is found in the cilium. The protein resides in the photoreceptor outer segment. Its function is as follows. Photoreceptor required for image-forming vision at low light intensity. While most salt water fish species use retinal as chromophore, most freshwater fish use 3-dehydroretinal, or a mixture of retinal and 3-dehydroretinal. Light-induced isomerization of 11-cis to all-trans retinal triggers a conformational change that activates signaling via G-proteins. Subsequent receptor phosphorylation mediates displacement of the bound G-protein alpha subunit by arrestin and terminates signaling. In Sarpa salpa (Salema), this protein is Rhodopsin (rho).